The sequence spans 477 residues: Ubiquitin carboxyl-terminal hydrolase 7 (477 aa).

The 76-residue stretch at 2–77 (LTVSVKWQKK…LMMMGTADEI (76 aa)) folds into the Ubiquitin-like domain. Positions 104-473 (AGLVNLGNTC…MAYIVMYKAR (370 aa)) constitute a USP domain. The active-site Nucleophile is Cys-113. Residues 171–190 (MPFWMVLQKKYPQFAQLHNG) form a calmodulin-binding region. The segment at 364–401 (QASAKSSSKGDDVKMTDAEGSSNQSGESSTGDQQEGAS) is disordered. Positions 371-380 (SKGDDVKMTD) are enriched in basic and acidic residues. Residues 382–399 (EGSSNQSGESSTGDQQEG) are compositionally biased toward polar residues. The Proton acceptor role is filled by His-425.

Belongs to the peptidase C19 family. Interacts with calmodulin (CaM).

The enzyme catalyses Thiol-dependent hydrolysis of ester, thioester, amide, peptide and isopeptide bonds formed by the C-terminal Gly of ubiquitin (a 76-residue protein attached to proteins as an intracellular targeting signal).. Recognizes and hydrolyzes the peptide bond at the C-terminal Gly of ubiquitin. Involved in the processing of poly-ubiquitin precursors as well as that of ubiquitinated proteins. In Arabidopsis thaliana (Mouse-ear cress), this protein is Ubiquitin carboxyl-terminal hydrolase 7 (UBP7).